Here is a 191-residue protein sequence, read N- to C-terminus: Peptidyl-tRNA hydrolase (191 aa).

Tyr17 lines the tRNA pocket. His22 acts as the Proton acceptor in catalysis. 3 residues coordinate tRNA: Tyr68, Asn70, and Asn116.

This sequence belongs to the PTH family. As to quaternary structure, monomer.

Its subcellular location is the cytoplasm. The catalysed reaction is an N-acyl-L-alpha-aminoacyl-tRNA + H2O = an N-acyl-L-amino acid + a tRNA + H(+). Hydrolyzes ribosome-free peptidyl-tRNAs (with 1 or more amino acids incorporated), which drop off the ribosome during protein synthesis, or as a result of ribosome stalling. Its function is as follows. Catalyzes the release of premature peptidyl moieties from peptidyl-tRNA molecules trapped in stalled 50S ribosomal subunits, and thus maintains levels of free tRNAs and 50S ribosomes. This Mycobacterium ulcerans (strain Agy99) protein is Peptidyl-tRNA hydrolase.